We begin with the raw amino-acid sequence, 262 residues long: GTP cyclohydrolase 1 type 2 homolog (262 aa).

A divalent metal cation is bound by residues histidine 64, histidine 65, aspartate 103, histidine 224, and glutamate 228.

This sequence belongs to the GTP cyclohydrolase I type 2/NIF3 family. In terms of assembly, homohexamer.

This chain is GTP cyclohydrolase 1 type 2 homolog, found in Clostridium perfringens (strain 13 / Type A).